The following is a 514-amino-acid chain: MKLVTSEEIKRLEERLEREYSIPPILLMENAASFLFSFLKEKFEDIENRKIAILCGPGNNGGDGVALARYLYSNGIRKITIFSYLWGKKISDLLKIQLGLLKNLVEIKDILQDYTELKEYELIVDGIFGIGLKREIDDDLKKIFRYINNLGKKIISIDIPSGINSDTGEIMGEALRADYVLTMFLPKVGLFETGAVDYVGEVIVGRLGIPIEIVNDIVESNIHLVDWELLKDIVRIPSKGVHKGKKGKVLIIGGSFRYTGAPILSALSALRTGAGMVYLAVPEKISMVYRGNYPEIIYIPLKDKDGYISYDNLGYILEIIETYGIEAVAIGPGIGINEDVRRLVQDFLRKVDKKVVVDADALSFVKDILGDISGKDVVFTPHYGEMSRIVEESVETISKKRVEIGRNFVERYKLNLIIKGPNSLFFDPKNHVYVNPFADFLLATAGSGDVLTGIIAGFSAQGYSLKEACILGNFVHGYSSVIWKKYKGSVGLTASDIIKILPLAIDEVIRRRNV.

An NAD(P)H-hydrate epimerase region spans residues 1–218 (MKLVTSEEIK…IPIEIVNDIV (218 aa)). In terms of domain architecture, YjeF N-terminal spans 9–215 (IKRLEERLER…RLGIPIEIVN (207 aa)). An NADPHX 1; for epimerase activity region spans residues 59–63 (NNGGD). 2 residues coordinate K(+): asparagine 60 and aspartate 125. The tract at residues 129-135 (GIGLKRE) is NADPHX 1; for epimerase activity. Residue aspartate 158 participates in (6S)-NADPHX binding. Serine 161 contributes to the K(+) binding site. A YjeF C-terminal domain is found at 226-508 (DWELLKDIVR…KILPLAIDEV (283 aa)). Residues 226–514 (DWELLKDIVR…IDEVIRRRNV (289 aa)) form an ADP-dependent (S)-NAD(P)H-hydrate dehydratase region. A (6S)-NADPHX-binding site is contributed by glycine 333. The NADPHX 2; for dehydratase activity stretch occupies residues 382 to 388 (HYGEMSR). ADP-binding positions include 419–423 (KGPNS) and 439–448 (DFLLATAGSG). (6S)-NADPHX is bound at residue aspartate 449.

It in the N-terminal section; belongs to the NnrE/AIBP family. This sequence in the C-terminal section; belongs to the NnrD/CARKD family. Requires K(+) as cofactor.

It catalyses the reaction (6S)-NADHX + ADP = AMP + phosphate + NADH + H(+). The catalysed reaction is (6S)-NADPHX + ADP = AMP + phosphate + NADPH + H(+). The enzyme catalyses (6R)-NADHX = (6S)-NADHX. It carries out the reaction (6R)-NADPHX = (6S)-NADPHX. Functionally, bifunctional enzyme that catalyzes the epimerization of the S- and R-forms of NAD(P)HX and the dehydration of the S-form of NAD(P)HX at the expense of ADP, which is converted to AMP. This allows the repair of both epimers of NAD(P)HX, a damaged form of NAD(P)H that is a result of enzymatic or heat-dependent hydration. In Dictyoglomus turgidum (strain DSM 6724 / Z-1310), this protein is Bifunctional NAD(P)H-hydrate repair enzyme Nnr (nnr).